The sequence spans 197 residues: Small ribosomal subunit protein uS5 (197 aa).

Positions 1–17 are enriched in basic and acidic residues; that stretch reads MAERENRGRGRGRNREE. 2 disordered regions span residues 1 to 22 and 158 to 197; these read MAER…TPEF and NESS…SEEA. Residues 22–85 enclose the S5 DRBM domain; the sequence is FADRLVAINR…EQAKRQLIRV (64 aa). Basic and acidic residues predominate over residues 172–186; that stretch reads KVADILPKRDDHPQI.

Belongs to the universal ribosomal protein uS5 family. As to quaternary structure, part of the 30S ribosomal subunit. Contacts proteins S4 and S8.

In terms of biological role, with S4 and S12 plays an important role in translational accuracy. Located at the back of the 30S subunit body where it stabilizes the conformation of the head with respect to the body. The polypeptide is Small ribosomal subunit protein uS5 (Jannaschia sp. (strain CCS1)).